Here is a 336-residue protein sequence, read N- to C-terminus: MFLTLIAAIISFMVSAFTMPYFIKFYQLKKIGGQQMHEDVKQHLAKAGTPTMGGTVFLLVATAVSLLVSLFSIKNTQSLALISGILSIVVIYGIIGFLDDFLKIFKQINEGLTAKQKLALQLAGGLMFYFLHVSPSGISSINVFGYQLSLGIFYLFFVLFWVVGFSNAVNLTDGIDGLASISVVISLVTYGVIAYVQGQFDVLLLIGTMIGALLGFFCFNHKPAKVFMGDVGSLALGAMLAAISIALRQEWTLLIIGIVYVLETSSVMLQVSYFKYTKKKYGEGRRIFRMTPFHHHLELGGLSGKGKKWSEWQVDAFLWGVGSLASLLVLAILYVF.

The next 10 membrane-spanning stretches (helical) occupy residues 3–23 (LTLI…PYFI), 53–73 (GGTV…LFSI), 78–98 (SLAL…IGFL), 118–138 (LALQ…PSGI), 143–163 (VFGY…FWVV), 174–194 (GIDG…GVIA), 200–220 (FDVL…FCFN), 226–246 (VFMG…ISIA), 251–271 (WTLL…MLQV), and 316–336 (AFLW…LYVF).

It belongs to the glycosyltransferase 4 family. MraY subfamily. Mg(2+) serves as cofactor.

Its subcellular location is the cell membrane. The catalysed reaction is UDP-N-acetyl-alpha-D-muramoyl-L-alanyl-gamma-D-glutamyl-L-lysyl-D-alanyl-D-alanine + di-trans,octa-cis-undecaprenyl phosphate = Mur2Ac(oyl-L-Ala-gamma-D-Glu-L-Lys-D-Ala-D-Ala)-di-trans,octa-cis-undecaprenyl diphosphate + UMP. Its pathway is cell wall biogenesis; peptidoglycan biosynthesis. Catalyzes the initial step of the lipid cycle reactions in the biosynthesis of the cell wall peptidoglycan: transfers peptidoglycan precursor phospho-MurNAc-pentapeptide from UDP-MurNAc-pentapeptide onto the lipid carrier undecaprenyl phosphate, yielding undecaprenyl-pyrophosphoryl-MurNAc-pentapeptide, known as lipid I. This is Phospho-N-acetylmuramoyl-pentapeptide-transferase from Streptococcus pyogenes serotype M4 (strain MGAS10750).